A 246-amino-acid polypeptide reads, in one-letter code: Ribonuclease PH (246 aa).

Phosphate contacts are provided by residues arginine 95 and 133-135 (GTR).

The protein belongs to the RNase PH family. In terms of assembly, homohexameric ring arranged as a trimer of dimers.

The enzyme catalyses tRNA(n+1) + phosphate = tRNA(n) + a ribonucleoside 5'-diphosphate. Functionally, phosphorolytic 3'-5' exoribonuclease that plays an important role in tRNA 3'-end maturation. Removes nucleotide residues following the 3'-CCA terminus of tRNAs; can also add nucleotides to the ends of RNA molecules by using nucleoside diphosphates as substrates, but this may not be physiologically important. Probably plays a role in initiation of 16S rRNA degradation (leading to ribosome degradation) during starvation. The chain is Ribonuclease PH from Bordetella bronchiseptica (strain ATCC BAA-588 / NCTC 13252 / RB50) (Alcaligenes bronchisepticus).